Consider the following 630-residue polypeptide: tRNA uridine 5-carboxymethylaminomethyl modification enzyme MnmG (630 aa).

13–18 (GGGHAG) contacts FAD. 273–287 (GPRYCPSIEDKIHRF) is an NAD(+) binding site.

The protein belongs to the MnmG family. Homodimer. Heterotetramer of two MnmE and two MnmG subunits. The cofactor is FAD.

It is found in the cytoplasm. In terms of biological role, NAD-binding protein involved in the addition of a carboxymethylaminomethyl (cmnm) group at the wobble position (U34) of certain tRNAs, forming tRNA-cmnm(5)s(2)U34. This Pseudomonas putida (strain GB-1) protein is tRNA uridine 5-carboxymethylaminomethyl modification enzyme MnmG.